The sequence spans 542 residues: Pre-mRNA-splicing factor 38B (542 aa).

Residues 1 to 12 (MANNSPALTGNS) are compositionally biased toward polar residues. The disordered stretch occupies residues 1–41 (MANNSPALTGNSQPQHQAAAAVTQQQQQCGGGGGATKPAVS). An N-acetylalanine modification is found at alanine 2. Serine 5 bears the Phosphoserine mark. Positions 13-28 (QPQHQAAAAVTQQQQQ) are enriched in low complexity. Lysine 228 carries the post-translational modification N6-acetyllysine. Residues 233–542 (QIKTRPRKIK…KEHKSKDETV (310 aa)) form a disordered region. Basic and acidic residues predominate over residues 244–256 (DGKEGIEEIDRHV). Basic residues predominate over residues 257–285 (ERRRSRSPRRSLSPRRSPRRSRSRSHHRE). A phosphoserine mark is found at serine 289, serine 291, serine 319, and serine 321. Positions 292–328 (FDRELEREKERQRLEREAKEREKERRRSRSIDRGLDR) are enriched in basic and acidic residues. Positions 293–322 (DRELEREKERQRLEREAKEREKERRRSRSI) form a coiled coil. A compositionally biased stretch (basic residues) spans 329 to 345 (RRSRSRERHRSRSRSRD). Basic and acidic residues predominate over residues 346–419 (RKGDRRDRDR…DRRHRDDKKE (74 aa)). Residues 420–447 (SKKKHSRSRSRERKHRSRSRNAGKRSRS) show a composition bias toward basic residues. Serine 445 is modified (phosphoserine). A compositionally biased stretch (basic and acidic residues) spans 448 to 465 (RSKDKSSRHKNESKEKAN). Serine 470, serine 472, and serine 478 each carry phosphoserine. 2 stretches are compositionally biased toward basic and acidic residues: residues 478 to 491 (SVEK…PSRE) and 498 to 520 (RSQD…RQDH). Phosphoserine is present on residues serine 523, serine 525, and serine 530. Over residues 530–542 (SQEKEHKSKDETV) the composition is skewed to basic and acidic residues.

Belongs to the PRP38 family.

Its subcellular location is the nucleus. In terms of biological role, may be required for pre-mRNA splicing. This is Pre-mRNA-splicing factor 38B (Prpf38b) from Mus musculus (Mouse).